The primary structure comprises 130 residues: Large ribosomal subunit protein bL20 (130 aa).

Belongs to the bacterial ribosomal protein bL20 family.

Functionally, binds directly to 23S ribosomal RNA and is necessary for the in vitro assembly process of the 50S ribosomal subunit. It is not involved in the protein synthesizing functions of that subunit. This Solibacter usitatus (strain Ellin6076) protein is Large ribosomal subunit protein bL20.